Reading from the N-terminus, the 428-residue chain is Serine--tRNA ligase (428 aa).

236 to 238 (TAE) contacts L-serine. 267 to 269 (RSE) provides a ligand contact to ATP. Glu-290 is a binding site for L-serine. 354–357 (EISS) is an ATP binding site. Ser-388 provides a ligand contact to L-serine.

This sequence belongs to the class-II aminoacyl-tRNA synthetase family. Type-1 seryl-tRNA synthetase subfamily. Homodimer. The tRNA molecule binds across the dimer.

The protein resides in the cytoplasm. The enzyme catalyses tRNA(Ser) + L-serine + ATP = L-seryl-tRNA(Ser) + AMP + diphosphate + H(+). It carries out the reaction tRNA(Sec) + L-serine + ATP = L-seryl-tRNA(Sec) + AMP + diphosphate + H(+). It participates in aminoacyl-tRNA biosynthesis; selenocysteinyl-tRNA(Sec) biosynthesis; L-seryl-tRNA(Sec) from L-serine and tRNA(Sec): step 1/1. In terms of biological role, catalyzes the attachment of serine to tRNA(Ser). Is also able to aminoacylate tRNA(Sec) with serine, to form the misacylated tRNA L-seryl-tRNA(Sec), which will be further converted into selenocysteinyl-tRNA(Sec). This chain is Serine--tRNA ligase, found in Psychrobacter cryohalolentis (strain ATCC BAA-1226 / DSM 17306 / VKM B-2378 / K5).